A 227-amino-acid polypeptide reads, in one-letter code: MVKSSLQRILNSHCFAREKEGDKRSATLHASRTMPLLSQHSRGGCSSESSRVALHCCSNLGPGPRWCSDVPHPPLKIPGGRGNSQRDHSLSASILYSDERLNVTEEPTSNDKTRVLSIQCTLTEAKQVTWRAVWNGGGLYIELPAGPLPEGSKDSFAALLEFAEEQLRADHVFICFPKNREDRAALLRTFSFLGFEIVRPGHPLVPKRPDACFMVYTLEREDPGEED.

This sequence belongs to the ODC antizyme family. In terms of assembly, interacts with ODC1 and thereby sterically blocks ODC homodimerization. Forms a ternary complex with PSMB4 and OAZ1 before PSMB4 is incorporated into the 20S proteasome. Interacts with AZIN2; this interaction disrupts the interaction between the antizyme and ODC1. Interacts with FAM171A1.

Functionally, ornithine decarboxylase (ODC) antizyme protein that negatively regulates ODC activity and intracellular polyamine biosynthesis and uptake in response to increased intracellular polyamine levels. Binds to ODC monomers, inhibiting the assembly of the functional ODC homodimer, and targets the monomers for ubiquitin-independent proteolytic destruction by the 26S proteasome. Triggers ODC degradation by inducing the exposure of a cryptic proteasome-interacting surface of ODC. Stabilizes AZIN2 by interfering with its ubiquitination. Also inhibits cellular uptake of polyamines by inactivating the polyamine uptake transporter. SMAD1/OAZ1/PSMB4 complex mediates the degradation of the CREBBP/EP300 repressor SNIP1. Involved in the translocation of AZIN2 from ER-Golgi intermediate compartment (ERGIC) to the cytosol. The polypeptide is Ornithine decarboxylase antizyme 1 (Oaz1) (Rattus norvegicus (Rat)).